Consider the following 416-residue polypeptide: tRNA (guanine-N(7)-)-methyltransferase non-catalytic subunit wuho (416 aa).

The tract at residues 47-88 is disordered; the sequence is TQSQESCPATATSTTAGKEPGGKEQQLAKQPEEGGTSASGSV. A compositionally biased stretch (polar residues) spans 49–62; it reads SQESCPATATSTTA. WD repeat units lie at residues 89–130, 177–216, 220–258, and 317–357; these read ATST…ARLL, GHLS…DIHS, GHRE…ELLQ, and AGSW…PTTN.

Belongs to the WD repeat TRM82 family. Forms a heterodimer with the catalytic subunit Mettl1. Interacts with mei-P26 and weakly interacts with bgcn; required for the function or formation of the mei-P26-bgcn-bam-sxl complex. Interacts with nanos; may be involved in mei-P26-dependent derepression of the BMP signaling pathway. Interacts with Myc; the interaction may be mediated by mei-P26 and may be involved in the regulation of ribosome biogenesis. In testis, it is present at high level in hub cells, a niche for germline stem cells of testis. Ubiquitously expressed in all testicular cells throughout spermatogenesis. Ubiquitously expressed in all germline and somatic cells of the ovary.

It localises to the nucleus. The protein resides in the cytoplasm. The protein operates within tRNA modification; N(7)-methylguanine-tRNA biosynthesis. Functionally, required for the Mettl1-dependent formation of N(7)-methylguanine at position 46 (m7G46) in tRNA. In the Mettl1-wuho methyltransferase complex, it is required to stabilize and induce conformational changes of the catalytic subunit. Required for binding of nanos mRNA and repression of translation by the mei-P26-bgcn-bam-sxl complex. May cooperate with mei-P26 and nanos to derepress the BMP signaling pathway. May cooperate with mei-P26 to suppress expression of a subset of microRNAs. May cooperate with mei-P26 to regulate bam expression levels in germline cells during gametogenesis. Required to promote mitosis to meiosis transition during gametogenesis. May regulate germline cell division in part by regulating ribosome biogenesis. The polypeptide is tRNA (guanine-N(7)-)-methyltransferase non-catalytic subunit wuho (Drosophila erecta (Fruit fly)).